Consider the following 565-residue polypeptide: Alkaline nuclease (565 aa).

The protein belongs to the herpesviridae alkaline nuclease family. In terms of assembly, interacts with major DNA-binding protein; this interaction increases the nuclease processivity of the alkaline exonuclease.

The protein resides in the host nucleus. It is found in the host cytoplasm. Plays a role in processing non linear or branched viral DNA intermediates in order to promote the production of mature packaged unit-length linear progeny viral DNA molecules. Exhibits endonuclease and exonuclease activities and accepts both double-stranded and single-stranded DNA as substrate. Exonuclease digestion of DNA is in the 5'-&gt; 3' direction and the products are 5'-monophosphate nucleosides. Additionally, forms a recombinase with the major DNA-binding protein, which displays strand exchange activity. This is Alkaline nuclease from Equine herpesvirus 1 (strain V592) (EHV-1).